The following is a 522-amino-acid chain: 3'3'-cGAMP-specific phosphodiesterase 2 (522 aa).

In terms of domain architecture, Response regulatory spans 36-160 (CVLLVDDDEQ…QKLRTLLYSM (125 aa)). Asp-91 is subject to 4-aspartylphosphate. The region spanning 325-522 (LRETSKELVY…FIAIRASLPD (198 aa)) is the HD-GYP domain. Residues His-382 and Asp-383 each contribute to the a divalent metal cation site. Catalysis depends on Lys-386, which acts as the Proton donor. A divalent metal cation is bound by residues His-411, His-437, His-438, and Asp-466.

In terms of assembly, homodimer. The cofactor is Mn(2+).

It catalyses the reaction 3',3'-cGAMP + H2O = 5'-pApG-3' + H(+). Functionally, phosphodiesterase (PDE) that catalyzes the hydrolysis of 3'3'-cyclic GMP-AMP (3'3'-cGAMP), leading to linear 5'-pApG. Counteracts the function of the 3'3'-cGAMP synthase DncV, and is involved in the modulation of intracellular 3'3'-cGAMP levels. Enhances bacterial chemotaxis and inhibits intestinal colonization in vivo. Thus exerts a crucial role in regulating bacterial infectivity through catalyzing 3'3'-cGAMP degradation. Is specific for 3'3'-cGAMP since it cannot degrade other cGAMP linkage isomers (3'2'-, 2'3'-, and 2'2'-cGAMPs). Is also able to hydrolyze c-di-GMP but not c-di-AMP. This is 3'3'-cGAMP-specific phosphodiesterase 2 from Vibrio cholerae serotype O1 (strain ATCC 39315 / El Tor Inaba N16961).